A 59-amino-acid chain; its full sequence is Putative zinc finger protein ORF59a (59 aa).

The C2H2-type; degenerate zinc finger occupies 11–33 (YQCLRCGLTFRTKKQLIRHLVNT).

The polypeptide is Putative zinc finger protein ORF59a (Acidianus hospitalis (AFV-1)).